We begin with the raw amino-acid sequence, 304 residues long: Carnitine monooxygenase reductase subunit (304 aa).

Positions 1-93 (MEQLTPLIKR…SEPKNLFPLA (93 aa)) constitute an FAD-binding FR-type domain. A 2Fe-2S ferredoxin-type domain is found at 219 to 304 (FTVVLAKSNQ…AKGKKLVLDL (86 aa)). The [2Fe-2S] cluster site is built by Cys253, Cys258, Cys261, and Cys291.

This sequence belongs to the PDR/VanB family. CntB subfamily. In terms of assembly, composed of an oxygenase subunit and a reductase subunit. The cofactor is FMN. Requires [2Fe-2S] cluster as cofactor.

It carries out the reaction (R)-carnitine + NADH + O2 + H(+) = (3R)-3-hydroxy-4-oxobutanoate + trimethylamine + NAD(+) + H2O. It catalyses the reaction (R)-carnitine + NADPH + O2 + H(+) = (3R)-3-hydroxy-4-oxobutanoate + trimethylamine + NADP(+) + H2O. It functions in the pathway amine and polyamine metabolism; carnitine metabolism. Inhibited by EDTA. Its function is as follows. Converts carnitine to trimethylamine and malic semialdehyde. Acts on both enantiomers. In Acinetobacter pittii (strain PHEA-2), this protein is Carnitine monooxygenase reductase subunit.